Here is a 38-residue protein sequence, read N- to C-terminus: Lebetin-2-alpha (38 aa).

The disordered stretch occupies residues 1–38; that stretch reads GDNKPPKKGPPNGCFGHKIDRIGSHSGLGCNKVDDNKG. A disulfide bridge links Cys14 with Cys30.

The protein belongs to the natriuretic peptide family. As to expression, expressed by the venom gland.

It localises to the secreted. Its function is as follows. Inhibits platelet aggregation induced by thrombin, collagen and PAF-acether. Human platelet aggregation induced by thrombin is inhibited by synthetic lebetin-1-alpha with (IC(50)=140 nM). In vivo, inhibits collagen-induced thrombocytopenia in rats. Is not toxic upon intravenous injection into mice and rats. Functionally, inhibits platelet aggregation induced by thrombin, collagen and PAF-acether. Human platelet aggregation induced by thrombin is inhibited by synthetic lebetin-1-beta with (IC(50)=32 nM). In vivo, inhibits collagen-induced thrombocytopenia in rats. Is not toxic upon intravenous injection into mice and rats. In terms of biological role, inhibits platelet aggregation induced by thrombin, collagen and PAF-acether. Human platelet aggregation induced by thrombin is inhibited by synthetic lebetin-1-gamma with (IC(50)=5 nM). In vivo, inhibits collagen-induced thrombocytopenia in rats. Is not toxic upon intravenous injection into mice and rats. Inhibits platelet aggregation induced by thrombin, collagen and PAF-acether. Human platelet aggregation induced by thrombin is inhibited by synthetic lebetin-1-alpha with (IC(50)=2.5 nM). In vivo, inhibits collagen-induced thrombocytopenia in rats. Is not toxic upon intravenous injection into mice and rats. Its function is as follows. Inhibits platelet aggregation induced by thrombin, collagen and PAF-acether. Human platelet aggregation induced by thrombin is inhibited by synthetic lebetin-1-alpha with (IC(50)=2.8 nM). In vivo, inhibits collagen-induced thrombocytopenia in rats. Is not toxic upon intravenous injection into mice and rats. The polypeptide is Lebetin-2-alpha (Macrovipera lebetinus (Levantine viper)).